The primary structure comprises 262 residues: GTP cyclohydrolase 1 type 2 homolog (262 aa).

A divalent metal cation contacts are provided by His-65, Asp-102, His-222, and Glu-225.

It belongs to the GTP cyclohydrolase I type 2/NIF3 family. Homohexamer.

The polypeptide is GTP cyclohydrolase 1 type 2 homolog (Streptococcus pyogenes serotype M3 (strain ATCC BAA-595 / MGAS315)).